Consider the following 438-residue polypeptide: MSCRFQSSSMSYGGGFGAGSCQLGGGRNISTCSSRFVTGGSSGGYGGGMSCGFGGGAGGGYGGGFGGGFGGSCGGGFGGGFGDFGSVDGGLLSGNEKITMQNLNDRLASYLEKVRALEAANADLEVKIRDWHLKQSPTSPERDYSAYYKTIEELRIKILEATTDNNRIVLEIDNARLAADDFRLKYENELALRQSVEADINGLRRVLDELTLAKTDLEMQIESLNEELAYLKKNHEEEMKEFSNQAVGQVNVEMDATPGIDLTRVLAEMREQYEALAEKNRRDAEAWFQAKSAELNKEVSSNAAMIQTSKTEITELRRTLQGLEIELQSQLSMKAGLESTLAETECRYALQLQQIQALISSIEAQLSELRSEMECQNQEYKMLLDIKTRLEQEIATYRSLLEGQDAKMTGFNTGGNSTTTSNTSTSPSTSGRPDFRKY.

Residues 1–95 form a head region; the sequence is MSCRFQSSSM…SVDGGLLSGN (95 aa). An omega-N-methylarginine mark is found at Arg27 and Arg35. Positions 96-131 are coil; sequence EKITMQNLNDRLASYLEKVRALEAANADLEVKIRDW. The IF rod domain occupies 96–408; the sequence is EKITMQNLND…SLLEGQDAKM (313 aa). The segment at 132 to 150 is linker 1; sequence HLKQSPTSPERDYSAYYKT. Residues 151–242 form a coil 1B region; sequence IEELRIKILE…KNHEEEMKEF (92 aa). The interval 243-265 is linker 12; sequence SNQAVGQVNVEMDATPGIDLTRV. The tract at residues 266-404 is coil 2; that stretch reads LAEMREQYEA…ATYRSLLEGQ (139 aa). The segment at 405–438 is tail; it reads DAKMTGFNTGGNSTTTSNTSTSPSTSGRPDFRKY. The tract at residues 408 to 438 is disordered; that stretch reads MTGFNTGGNSTTTSNTSTSPSTSGRPDFRKY. Residues 409–431 show a composition bias toward low complexity; the sequence is TGFNTGGNSTTTSNTSTSPSTSG.

Belongs to the intermediate filament family. Heterotetramer of two type I and two type II keratins. In terms of processing, O-glycosylated; glycans consist of single N-acetylglucosamine residues.

Type 1 keratin. Maintains postnatal tongue mucosal cell homeostasis and tissue organization in response to mechanical stress, potentially via regulation of the G1/S phase cyclins CCNE1 and CCNE2. The polypeptide is Keratin, type I cytoskeletal 13 (Rattus norvegicus (Rat)).